Reading from the N-terminus, the 275-residue chain is Formamidopyrimidine-DNA glycosylase (275 aa).

Pro2 functions as the Schiff-base intermediate with DNA in the catalytic mechanism. The Proton donor role is filled by Glu3. The active-site Proton donor; for beta-elimination activity is the Lys59. His93, Arg112, and Arg153 together coordinate DNA. The segment at 238 to 272 (NVYDRVGKPCPRCQTAIERIVVAQRSTFFCPLCQV) adopts an FPG-type zinc-finger fold. Arg262 functions as the Proton donor; for delta-elimination activity in the catalytic mechanism.

Belongs to the FPG family. In terms of assembly, monomer. Requires Zn(2+) as cofactor.

It catalyses the reaction Hydrolysis of DNA containing ring-opened 7-methylguanine residues, releasing 2,6-diamino-4-hydroxy-5-(N-methyl)formamidopyrimidine.. It carries out the reaction 2'-deoxyribonucleotide-(2'-deoxyribose 5'-phosphate)-2'-deoxyribonucleotide-DNA = a 3'-end 2'-deoxyribonucleotide-(2,3-dehydro-2,3-deoxyribose 5'-phosphate)-DNA + a 5'-end 5'-phospho-2'-deoxyribonucleoside-DNA + H(+). Functionally, involved in base excision repair of DNA damaged by oxidation or by mutagenic agents. Acts as a DNA glycosylase that recognizes and removes damaged bases. Has a preference for oxidized purines, such as 7,8-dihydro-8-oxoguanine (8-oxoG). Has AP (apurinic/apyrimidinic) lyase activity and introduces nicks in the DNA strand. Cleaves the DNA backbone by beta-delta elimination to generate a single-strand break at the site of the removed base with both 3'- and 5'-phosphates. This is Formamidopyrimidine-DNA glycosylase from Chloroflexus aggregans (strain MD-66 / DSM 9485).